A 362-amino-acid chain; its full sequence is Adenosine deaminase (362 aa).

The Zn(2+) site is built by His-19 and His-21. Positions 21, 23, and 181 each coordinate substrate. His-208 provides a ligand contact to Zn(2+). Glu-211 serves as the catalytic Proton donor. Asp-300 provides a ligand contact to Zn(2+).

The protein belongs to the metallo-dependent hydrolases superfamily. Adenosine and AMP deaminases family. Adenosine deaminase subfamily. The cofactor is Zn(2+).

It catalyses the reaction adenosine + H2O + H(+) = inosine + NH4(+). The catalysed reaction is 2'-deoxyadenosine + H2O + H(+) = 2'-deoxyinosine + NH4(+). Functionally, catalyzes the hydrolytic deamination of adenosine and 2-deoxyadenosine. The sequence is that of Adenosine deaminase from Mycobacterium sp. (strain JLS).